A 78-amino-acid chain; its full sequence is Serine rich endogenous peptide 12 (78 aa).

An N-terminal signal peptide occupies residues 1–24 (MRNTISSKMGQVLIVLLLLCTVLC). A propeptide spans 25–43 (RTESALPSGQHSVLLTGRR) (removed in mature form). A disordered region spans residues 47–78 (SGASGPVRSSQSSQAGGRFNDADPIAIDYGKY). The SCOOP motif signature appears at 50–64 (SGPVRSSQSSQAGGR). Positions 56-58 (SQS) match the SxS motif essential for MIK2 binding motif.

The protein belongs to the serine rich endogenous peptide (SCOOP) phytocytokine family. As to quaternary structure, interacts with MIK2 (via extracellular leucine-rich repeat domain); this interaction triggers the formation of complex between MIK2 and the BAK1/SERK3 and SERK4 coreceptors, and subsequent BAK1 activation by phosphorylation on 'Ser-612'. In terms of tissue distribution, mostly expressed in the whole root system, and, to a lower extent, in seedlings shoots.

It localises to the cell membrane. The protein localises to the secreted. Its subcellular location is the extracellular space. The protein resides in the apoplast. Functionally, brassicaceae-specific phytocytokine (plant endogenous peptide released into the apoplast) perceived by MIK2 in a BAK1/SERK3 and SERK4 coreceptors-dependent manner, that modulates various physiological and antimicrobial processes including root growth prevention, phospholipid signaling pathway activation (e.g. accumulation of phosphatidic acid (PA), but transient reduction of phosphatidylinositol 4,5-bisphosphate (PIP(2)) levels) and reactive oxygen species (ROS) response regulation. Moderates primary root growth, and regulates root meristems and cell elongation; this root growth regulation is associated with the modulation of ROS metabolism and alteration of cell wall structure, and depends on variations in many genes expression. Promotes ROS (e.g. superoxide anion O(2) and hydrogen peroxide H(2)O(2)) production and MAPK (e.g. MPK3, MPK4 and MPK6) activation in a MIK2-dependent manner, thus leading to the up-regulation of immune-related marker genes (e.g. WRKY30, WRKY33 and CYP81F2). Involved in biotic and oxidative stress responses; acts as a negative regulator of defense against necrotrophic pathogens such as the bacteria Erwinia amylovora and the fungus Alternaria brassicicola. Able to prime defense responses against the pathogenic bacteria Pseudomonas syringae pv. tomato DC3000. Contributes to the triggering of defense responses toward generalist herbivores such as Spodoptera littoralis, probably via the activation of jasmonate and indole glucosinolate biosynthesis. Triggers the expression of several PROSCOOP genes (e.g. PROSCOOP3, PROSCOOP7, PROSCOOP12 and PROSCOOP13). In Arabidopsis thaliana (Mouse-ear cress), this protein is Serine rich endogenous peptide 12.